A 240-amino-acid polypeptide reads, in one-letter code: 4-hydroxy-tetrahydrodipicolinate reductase (240 aa).

NAD(+) is bound at residue 7-12 (GLSGTM). K35 serves as a coordination point for NADP(+). Residues 74–76 (GTT) and 98–101 (ATNM) each bind NAD(+). H131 acts as the Proton donor/acceptor in catalysis. H132 is a (S)-2,3,4,5-tetrahydrodipicolinate binding site. The Proton donor role is filled by K135. A (S)-2,3,4,5-tetrahydrodipicolinate-binding site is contributed by 141-142 (GS).

It belongs to the DapB family.

The protein resides in the cytoplasm. The enzyme catalyses (S)-2,3,4,5-tetrahydrodipicolinate + NAD(+) + H2O = (2S,4S)-4-hydroxy-2,3,4,5-tetrahydrodipicolinate + NADH + H(+). The catalysed reaction is (S)-2,3,4,5-tetrahydrodipicolinate + NADP(+) + H2O = (2S,4S)-4-hydroxy-2,3,4,5-tetrahydrodipicolinate + NADPH + H(+). It functions in the pathway amino-acid biosynthesis; L-lysine biosynthesis via DAP pathway; (S)-tetrahydrodipicolinate from L-aspartate: step 4/4. In terms of biological role, catalyzes the conversion of 4-hydroxy-tetrahydrodipicolinate (HTPA) to tetrahydrodipicolinate. The polypeptide is 4-hydroxy-tetrahydrodipicolinate reductase (Alkaliphilus metalliredigens (strain QYMF)).